The chain runs to 343 residues: Methionine import ATP-binding protein MetN (343 aa).

Residues 2 to 241 (IKLSNITKVF…PKTPLAQKFI (240 aa)) form the ABC transporter domain. 38–45 (GASGAGKS) contributes to the ATP binding site.

Belongs to the ABC transporter superfamily. Methionine importer (TC 3.A.1.24) family. The complex is composed of two ATP-binding proteins (MetN), two transmembrane proteins (MetI) and a solute-binding protein (MetQ).

The protein resides in the cell inner membrane. It catalyses the reaction L-methionine(out) + ATP + H2O = L-methionine(in) + ADP + phosphate + H(+). The enzyme catalyses D-methionine(out) + ATP + H2O = D-methionine(in) + ADP + phosphate + H(+). Part of the ABC transporter complex MetNIQ involved in methionine import. Responsible for energy coupling to the transport system. The polypeptide is Methionine import ATP-binding protein MetN (Escherichia coli O6:K15:H31 (strain 536 / UPEC)).